Reading from the N-terminus, the 393-residue chain is MVTVEEVRKAKRAEGPATILAIGTATPANCVNQSTYPDYYFRITNSEHKTELKEKFQRMCDKSMITKRYMHLTEEILKENPSFCEYMAPSLDARQDIAVVEVPKLGKEAAQSAIKEWGQPKSKITHVFFCTTSGVDMPGADYQLTKLLGLRPSVKRLMMYQQGCFAGGTVLRLAKDLAENNKGARVLIVCSEITVVTFRGPSETHLDSLVGQALFGDGAAAVIVGADPTPAEKPLFQLVSAAQTLAPDSCGAIDGHLREVGLTFHLLKDVPSVVSNNIEKCLFEAFNPLGISDWNSVFWIAHPGGPAILDQVEDKLGLKPEKLRATRHVLSEYGNMSSACVLFILDEMRKASSNAGLGTTGEGLEWGVLFGFGPGLTIETVVLHSVPIKPGPH.

Residue Cys-164 is part of the active site.

Belongs to the thiolase-like superfamily. Chalcone/stilbene synthases family.

It catalyses the reaction (E)-4-coumaroyl-CoA + 3 malonyl-CoA + 3 H(+) = 2',4,4',6'-tetrahydroxychalcone + 3 CO2 + 4 CoA. It functions in the pathway secondary metabolite biosynthesis; flavonoid biosynthesis. In terms of biological role, the primary product of this enzyme is 4,2',4',6'-tetrahydroxychalcone (also termed naringenin-chalcone or chalcone) which can under specific conditions spontaneously isomerize into naringenin. In Ipomoea batatas (Sweet potato), this protein is Chalcone synthase DIII (CHS-DIII).